The chain runs to 154 residues: SsrA-binding protein (154 aa).

The disordered stretch occupies residues 135 to 154 (KREDLKRRQDQRDMARAMKR).

It belongs to the SmpB family.

It is found in the cytoplasm. Its function is as follows. Required for rescue of stalled ribosomes mediated by trans-translation. Binds to transfer-messenger RNA (tmRNA), required for stable association of tmRNA with ribosomes. tmRNA and SmpB together mimic tRNA shape, replacing the anticodon stem-loop with SmpB. tmRNA is encoded by the ssrA gene; the 2 termini fold to resemble tRNA(Ala) and it encodes a 'tag peptide', a short internal open reading frame. During trans-translation Ala-aminoacylated tmRNA acts like a tRNA, entering the A-site of stalled ribosomes, displacing the stalled mRNA. The ribosome then switches to translate the ORF on the tmRNA; the nascent peptide is terminated with the 'tag peptide' encoded by the tmRNA and targeted for degradation. The ribosome is freed to recommence translation, which seems to be the essential function of trans-translation. In Microcystis aeruginosa (strain NIES-843 / IAM M-2473), this protein is SsrA-binding protein.